The sequence spans 449 residues: Probable glycine dehydrogenase (decarboxylating) subunit 1 (449 aa).

Belongs to the GcvP family. N-terminal subunit subfamily. The glycine cleavage system is composed of four proteins: P, T, L and H. In this organism, the P 'protein' is a heterodimer of two subunits.

The catalysed reaction is N(6)-[(R)-lipoyl]-L-lysyl-[glycine-cleavage complex H protein] + glycine + H(+) = N(6)-[(R)-S(8)-aminomethyldihydrolipoyl]-L-lysyl-[glycine-cleavage complex H protein] + CO2. Its function is as follows. The glycine cleavage system catalyzes the degradation of glycine. The P protein binds the alpha-amino group of glycine through its pyridoxal phosphate cofactor; CO(2) is released and the remaining methylamine moiety is then transferred to the lipoamide cofactor of the H protein. The protein is Probable glycine dehydrogenase (decarboxylating) subunit 1 of Oceanobacillus iheyensis (strain DSM 14371 / CIP 107618 / JCM 11309 / KCTC 3954 / HTE831).